A 931-amino-acid chain; its full sequence is MLGTHFPPPPLGPSEGRAAPCTFQIPDGSYRCLALEAEESSSEDGLQGEVRLVDLEEEGTSKSRVNHGTPPLSRAPAIIQPSSCCREARGGFQHSDKPSREWDVVQARKVMTASVSSSPVPRVAQKPALGRSTSFTEKDLKEAKERSQRIAAQLTTPPSSNSRGVQLFNRRRQRVNEFTLESRGQRSPKLSQEALQTGHPSSPIGHAPGLSVNPTSPSKPGSPKHSSSQSPSRGVPGHIMEGYSEEASLLRHLEKVASEEEEVPLVVYLKENAALLTANGLHLSQNRETQQSSPNPPETEEVPSPAADINQNPSSPNATLTTAASNSHHNQPTADVNQNPPATITPVQQNSSETQCSPNGTLDSKPNTPSADDGQRPVPAEEVRSSILLIDKVSAPPSAASPFSREATPLSSSGPPAADLMSSSLLIGMQPSTLVASAEQEVSGHAAVTTPTKVYSEVHLTLAKPASVVNRTARPFGMQSPGTTSQIEQSPMMGRRHFGEKAWAPPASSMADRSPQPQRHIMARSPMVERRLVGQRSPVVERRPLGNFTPPPTYAETLSTAPVASQVRSPPSYSTLYPSSDPKPPHLKGQVVPANKTGILEESMARRGSRKSMFTFVEKPKVTPNPDLLDLVQTADEKRRQRDQGEVGMEDEPFALGAEASNFQQEPIARDRSGPAAAEETVPEWASCLKSPRIQAKPKPKPNQNLSEASGKGAELYARRQSRMEKYVIESSGHAELARCPSPTMSLPSSWKYTTNAPGGFRVASLSPARTPPASLYHGYLPENGVLRPEPTKQQPHQMRPSLYALSPVKEPAKISSRATSSRASSRTVSPRAASPAKPSSLDLVPNLPRAGLPPSPALPRPSRSSPGLYNAPVQDSLQPTAVSPTYSSDISPVSPSRAWSPRAKQAPRPSFSTRNAGIEAQVWKPSFCFK.

2 disordered regions span residues 56–78 (EEEG…APAI) and 113–243 (ASVS…MEGY). Residue Ser134 is modified to Phosphoserine. Over residues 136-148 (TEKDLKEAKERSQ) the composition is skewed to basic and acidic residues. Polar residues-rich tracts occupy residues 153–164 (QLTTPPSSNSRG) and 188–200 (PKLS…TGHP). Phosphoserine occurs at positions 202, 222, and 258. A compositionally biased stretch (low complexity) spans 214 to 232 (PTSPSKPGSPKHSSSQSPS). The tract at residues 280–420 (GLHLSQNRET…SSSGPPAADL (141 aa)) is disordered. Composition is skewed to polar residues over residues 282-293 (HLSQNRETQQSS) and 309-370 (INQN…NTPS). A compositionally biased stretch (basic and acidic residues) spans 373 to 384 (DGQRPVPAEEVR). Ser490 and Ser514 each carry phosphoserine. 2 disordered regions span residues 542 to 591 (RRPL…KGQV) and 691 to 711 (SPRI…EASG). Thr549 bears the Phosphothreonine mark. The PPxY motif motif lies at 551–554 (PPTY). The segment covering 556-568 (ETLSTAPVASQVR) has biased composition (polar residues). At Ser569 the chain carries Phosphoserine. A compositionally biased stretch (low complexity) spans 569–580 (SPPSYSTLYPSS). The PPxY motif signature appears at 570–573 (PPSY). A phosphoserine mark is found at Ser691, Ser742, Ser746, and Ser767. Phosphothreonine is present on Thr771. The disordered stretch occupies residues 775–918 (SLYHGYLPEN…RPSFSTRNAG (144 aa)). Over residues 816–841 (SSRATSSRASSRTVSPRAASPAKPSS) the composition is skewed to low complexity. Residue Ser835 is modified to Phosphoserine. At Arg850 the chain carries Omega-N-methylarginine. Ser856 is subject to Phosphoserine. The segment covering 874–895 (VQDSLQPTAVSPTYSSDISPVS) has biased composition (polar residues).

The protein belongs to the synaptopodin family. In terms of assembly, interacts with BAIAP1. Interacts with actin. Interacts (via PPxY motifs) with WWC1 (via WW domains). In terms of processing, O-glycosylated. Expressed at high levels in brain and at moderate, but still significant levels in the heart, skeletal muscle, lung and kidney. In brain, expressed in the cerebral cortex, hippocampus, olfactory bulb and striatum.

It localises to the cytoplasm. Its subcellular location is the cytoskeleton. The protein localises to the cell junction. It is found in the tight junction. The protein resides in the perikaryon. It localises to the cell projection. Its subcellular location is the dendritic spine. The protein localises to the postsynaptic density. It is found in the synapse. The protein resides in the cytosol. In terms of biological role, actin-associated protein that may play a role in modulating actin-based shape and motility of dendritic spines and renal podocyte foot processes. Seems to be essential for the formation of spine apparatuses in spines of telencephalic neurons, which is involved in synaptic plasticity. The protein is Synaptopodin (Synpo) of Rattus norvegicus (Rat).